The chain runs to 90 residues: Probable Fe(2+)-trafficking protein (90 aa).

This sequence belongs to the Fe(2+)-trafficking protein family.

In terms of biological role, could be a mediator in iron transactions between iron acquisition and iron-requiring processes, such as synthesis and/or repair of Fe-S clusters in biosynthetic enzymes. In Pasteurella multocida (strain Pm70), this protein is Probable Fe(2+)-trafficking protein.